We begin with the raw amino-acid sequence, 292 residues long: Ribosomal protein L11 methyltransferase (292 aa).

Residues Thr136, Gly159, Asp181, and Asn228 each contribute to the S-adenosyl-L-methionine site.

This sequence belongs to the methyltransferase superfamily. PrmA family.

The protein resides in the cytoplasm. The enzyme catalyses L-lysyl-[protein] + 3 S-adenosyl-L-methionine = N(6),N(6),N(6)-trimethyl-L-lysyl-[protein] + 3 S-adenosyl-L-homocysteine + 3 H(+). Methylates ribosomal protein L11. The polypeptide is Ribosomal protein L11 methyltransferase (Rhizobium leguminosarum bv. trifolii (strain WSM2304)).